A 226-amino-acid polypeptide reads, in one-letter code: Glycerol-3-phosphate acyltransferase (226 aa).

A run of 6 helical transmembrane segments spans residues 1–21, 56–76, 102–122, 134–154, 159–178, and 182–197; these read MGLW…LGSF, GPGA…IALV, LVTL…FLGF, ILLA…AVVV, IVSL…MVVL, and LPYI…YVIL.

Belongs to the PlsY family. In terms of assembly, probably interacts with PlsX.

It is found in the cell inner membrane. The enzyme catalyses an acyl phosphate + sn-glycerol 3-phosphate = a 1-acyl-sn-glycero-3-phosphate + phosphate. It functions in the pathway lipid metabolism; phospholipid metabolism. In terms of biological role, catalyzes the transfer of an acyl group from acyl-phosphate (acyl-PO(4)) to glycerol-3-phosphate (G3P) to form lysophosphatidic acid (LPA). This enzyme utilizes acyl-phosphate as fatty acyl donor, but not acyl-CoA or acyl-ACP. In Trichormus variabilis (strain ATCC 29413 / PCC 7937) (Anabaena variabilis), this protein is Glycerol-3-phosphate acyltransferase.